Reading from the N-terminus, the 207-residue chain is Ribonuclease HII (207 aa).

Residues 12–201 enclose the RNase H type-2 domain; that stretch reads ALVAGVDEVG…VRELLDVVSI (190 aa). Positions 18, 19, and 110 each coordinate a divalent metal cation.

The protein belongs to the RNase HII family. Mn(2+) is required as a cofactor. It depends on Mg(2+) as a cofactor.

The protein resides in the cytoplasm. The catalysed reaction is Endonucleolytic cleavage to 5'-phosphomonoester.. Its function is as follows. Endonuclease that specifically degrades the RNA of RNA-DNA hybrids. In Azotobacter vinelandii (strain DJ / ATCC BAA-1303), this protein is Ribonuclease HII.